The following is a 122-amino-acid chain: High-potential iron-sulfur protein (122 aa).

An N-terminal signal peptide occupies residues 1–37 (MSDKPISKSRRDAVKVMLGTAAAIPMINLVGFGTARA). The [4Fe-4S] cluster site is built by Cys80, Cys83, Cys100, and Cys114.

It belongs to the high-potential iron-sulfur protein (HiPIP) family. In terms of assembly, homodimer.

It is found in the periplasm. Functionally, specific class of high-redox-potential 4Fe-4S ferredoxins. Functions in anaerobic electron transport in most purple and in some other photosynthetic bacteria and in at least one genus (Paracoccus) of halophilic, denitrifying bacteria. In Allochromatium vinosum (strain ATCC 17899 / DSM 180 / NBRC 103801 / NCIMB 10441 / D) (Chromatium vinosum), this protein is High-potential iron-sulfur protein (hip).